Consider the following 37-residue polypeptide: Cytochrome b6-f complex subunit 5 (37 aa).

The helical transmembrane segment at 5-25 (FLFGIVLGLIPVTLAGLFVTA) threads the bilayer.

It belongs to the PetG family. The 4 large subunits of the cytochrome b6-f complex are cytochrome b6, subunit IV (17 kDa polypeptide, PetD), cytochrome f and the Rieske protein, while the 4 small subunits are PetG, PetL, PetM and PetN. The complex functions as a dimer.

The protein localises to the plastid. The protein resides in the chloroplast thylakoid membrane. Functionally, component of the cytochrome b6-f complex, which mediates electron transfer between photosystem II (PSII) and photosystem I (PSI), cyclic electron flow around PSI, and state transitions. PetG is required for either the stability or assembly of the cytochrome b6-f complex. This Daucus carota (Wild carrot) protein is Cytochrome b6-f complex subunit 5.